A 274-amino-acid chain; its full sequence is 2,3,4,5-tetrahydropyridine-2,6-dicarboxylate N-succinyltransferase (274 aa).

Substrate is bound by residues arginine 104 and aspartate 141.

It belongs to the transferase hexapeptide repeat family. Homotrimer.

It localises to the cytoplasm. The catalysed reaction is (S)-2,3,4,5-tetrahydrodipicolinate + succinyl-CoA + H2O = (S)-2-succinylamino-6-oxoheptanedioate + CoA. It participates in amino-acid biosynthesis; L-lysine biosynthesis via DAP pathway; LL-2,6-diaminopimelate from (S)-tetrahydrodipicolinate (succinylase route): step 1/3. The polypeptide is 2,3,4,5-tetrahydropyridine-2,6-dicarboxylate N-succinyltransferase (Serratia proteamaculans (strain 568)).